A 113-amino-acid polypeptide reads, in one-letter code: Endoribonuclease SymE (113 aa).

The region spanning 29-74 is the SpoVT-AbrB domain; sequence SRYPDYSRIPAITLKGQWLEAAGFATGTAVDVKVMEGCIVLTAQPA.

It belongs to the SymE family.

The protein resides in the cytoplasm. Functionally, involved in the degradation and recycling of damaged RNA. It is itself a target for degradation by the ATP-dependent protease Lon. This chain is Endoribonuclease SymE, found in Shigella flexneri serotype 5b (strain 8401).